The chain runs to 425 residues: D-amino acid dehydrogenase (425 aa).

FAD is bound at residue V3 to Y17.

The protein belongs to the DadA oxidoreductase family. The cofactor is FAD.

The catalysed reaction is a D-alpha-amino acid + A + H2O = a 2-oxocarboxylate + AH2 + NH4(+). The protein operates within amino-acid degradation; D-alanine degradation; NH(3) and pyruvate from D-alanine: step 1/1. In terms of biological role, oxidative deamination of D-amino acids. This chain is D-amino acid dehydrogenase, found in Rhodopseudomonas palustris (strain HaA2).